Here is a 517-residue protein sequence, read N- to C-terminus: Amidophosphoribosyltransferase (517 aa).

Met1 is modified (N-acetylmethionine). A propeptide spanning residues 1-11 is cleaved from the precursor; sequence MELEELGIREE. Residue Cys12 is the Nucleophile of the active site. The Glutamine amidotransferase type-2 domain maps to 12-261; sequence CGVFGCIASG…PGEIVEISRH (250 aa). Cys280 contributes to the [4Fe-4S] cluster binding site. Mg(2+) contacts are provided by Ser327, Asp389, and Asp390. 3 residues coordinate [4Fe-4S] cluster: Cys426, Cys503, and Cys506.

It in the C-terminal section; belongs to the purine/pyrimidine phosphoribosyltransferase family. As to quaternary structure, homotetramer. The cofactor is Mg(2+). [4Fe-4S] cluster serves as cofactor.

It catalyses the reaction 5-phospho-beta-D-ribosylamine + L-glutamate + diphosphate = 5-phospho-alpha-D-ribose 1-diphosphate + L-glutamine + H2O. It functions in the pathway purine metabolism; IMP biosynthesis via de novo pathway; N(1)-(5-phospho-D-ribosyl)glycinamide from 5-phospho-alpha-D-ribose 1-diphosphate: step 1/2. In terms of biological role, catalyzes the formation of phosphoribosylamine from phosphoribosylpyrophosphate (PRPP) and glutamine. The chain is Amidophosphoribosyltransferase from Mus musculus (Mouse).